The sequence spans 396 residues: Purine ribonucleoside efflux pump NepI (396 aa).

Topologically, residues 1-21 (MSEFIAENRGADAITRPNWSA) are cytoplasmic. A helical transmembrane segment spans residues 22 to 42 (VFSVAFCVACLIIVEFLPVSL). The Periplasmic segment spans residues 43-54 (LTPMAQDLGISE). Residues 55 to 75 (GVAGQSVTVTAFVAMFASLFI) form a helical membrane-spanning segment. Topologically, residues 76 to 85 (TQTIQATDRR) are cytoplasmic. Residues 86–106 (YVVILFAVLLTLSCLLVSFAN) form a helical membrane-spanning segment. Residue serine 107 is a topological domain, periplasmic. The helical transmembrane segment at 108 to 128 (FSLLLIGRACLGLALGGFWAM) threads the bilayer. Residues 129-147 (SASLTMRLVPPRTVPKALS) lie on the Cytoplasmic side of the membrane. A helical membrane pass occupies residues 148–168 (VIFGAVSIALVIAAPLGCFLG). Over 169–175 (ELIGWRN) the chain is Periplasmic. The helical transmembrane segment at 176-196 (VFNAAAAMGVLCIFWIIKSLP) threads the bilayer. Residues 197–215 (SLPGEPSHQKQNTFRLLQR) lie on the Cytoplasmic side of the membrane. Residues 216–236 (PGVMAGMIAIFMSFAGQFAFF) traverse the membrane as a helical segment. The Periplasmic segment spans residues 237–255 (TYIRPVYMTLAGFGVDGLT). Residues 256–276 (LVLLSFGIASFVGTSLSSFIL) traverse the membrane as a helical segment. The Cytoplasmic segment spans residues 277 to 281 (KRSVK). Residues 282 to 302 (LALAGAPFVLALSALVLTLWG) form a helical membrane-spanning segment. The Periplasmic segment spans residues 303 to 305 (SDK). The chain crosses the membrane as a helical span at residues 306–326 (IVATGVAIIWGLTFALIPVGW). Residues 327–343 (STWITRSLADQAEKAGS) lie on the Cytoplasmic side of the membrane. The helical transmembrane segment at 344 to 364 (IQVAVIQLANTCGAAIGGYAL) threads the bilayer. The Periplasmic segment spans residues 365 to 366 (DN). Residues 367–387 (IGLTSPLMLSGTLMLLTALLV) traverse the membrane as a helical segment. The Cytoplasmic segment spans residues 388–396 (TAKVKMKKS).

Belongs to the major facilitator superfamily. DHA1 family. NepI (TC 2.A.1.2.26) subfamily.

It is found in the cell inner membrane. The catalysed reaction is inosine(in) + H(+)(out) = inosine(out) + H(+)(in). It catalyses the reaction guanosine(in) + H(+)(out) = guanosine(out) + H(+)(in). Functionally, involved in the efflux of purine ribonucleosides, such as inosine and guanosine. This chain is Purine ribonucleoside efflux pump NepI, found in Escherichia coli O157:H7.